The sequence spans 489 residues: Glycogen synthase (489 aa).

Lys-15 serves as a coordination point for ADP-alpha-D-glucose.

The protein belongs to the glycosyltransferase 1 family. Bacterial/plant glycogen synthase subfamily.

It catalyses the reaction [(1-&gt;4)-alpha-D-glucosyl](n) + ADP-alpha-D-glucose = [(1-&gt;4)-alpha-D-glucosyl](n+1) + ADP + H(+). Its pathway is glycan biosynthesis; glycogen biosynthesis. In terms of biological role, synthesizes alpha-1,4-glucan chains using ADP-glucose. The polypeptide is Glycogen synthase (Francisella tularensis subsp. novicida (strain U112)).